Consider the following 77-residue polypeptide: DNA-directed RNA polymerase subunit epsilon (77 aa).

It belongs to the RNA polymerase subunit epsilon family. RNAP is composed of a core of 2 alpha, a beta and a beta' subunit. The core is associated with a delta subunit, and at least one of epsilon or omega. When a sigma factor is associated with the core the holoenzyme is formed, which can initiate transcription.

The catalysed reaction is RNA(n) + a ribonucleoside 5'-triphosphate = RNA(n+1) + diphosphate. In terms of biological role, a non-essential component of RNA polymerase (RNAP). This Streptococcus pneumoniae serotype 2 (strain D39 / NCTC 7466) protein is DNA-directed RNA polymerase subunit epsilon.